We begin with the raw amino-acid sequence, 30 residues long: Cyclotide mden-I (30 aa).

Residues 1 to 30 (GIPCGESCVYIPCITTAIGCSCKNKVCYRN) constitute a cross-link (cyclopeptide (Gly-Asn)). 3 disulfides stabilise this stretch: Cys4/Cys20, Cys8/Cys22, and Cys13/Cys27.

Belongs to the cyclotide family. Bracelet subfamily. This is a cyclic peptide.

Functionally, probably participates in a plant defense mechanism. This chain is Cyclotide mden-I, found in Melicytus dentatus (Tree violet).